The primary structure comprises 291 residues: MTTLAIDIGGTKLAAALIGADGQIRDRRELPTPASQTPEALRDALSALVSPLQVHAQRVAIASTGIIRDGSLLALNPHNLGGLLHFPLVKTLEQLTDLPTIAINDAQAAAWAEYQALEGDITEMVFITVSTGVGGGVVSGGKLLTGPGGLAGHIGHTLADPHGPVCGCGRTGCVEAIASGRGIAAAAQGELAGANAKTIFTHAGQGDEQAQQLIHRSARTLARLIADIKATTDCQCVVVGGSVGLAEGYLALVETYLAQEPAAFHVDLLAAHYRHDAGLLGAALLALGEKL.

Residues 5–12 and 132–139 contribute to the ATP site; these read AIDIGGTK and GVGGGVVS. Residues histidine 156, cysteine 166, cysteine 168, and cysteine 173 each coordinate Zn(2+).

It belongs to the ROK (NagC/XylR) family. NanK subfamily. In terms of assembly, homodimer.

The catalysed reaction is an N-acyl-D-mannosamine + ATP = an N-acyl-D-mannosamine 6-phosphate + ADP + H(+). It functions in the pathway amino-sugar metabolism; N-acetylneuraminate degradation; D-fructose 6-phosphate from N-acetylneuraminate: step 2/5. Its function is as follows. Catalyzes the phosphorylation of N-acetylmannosamine (ManNAc) to ManNAc-6-P. The protein is N-acetylmannosamine kinase of Escherichia coli O7:K1 (strain IAI39 / ExPEC).